The following is a 123-amino-acid chain: Large ribosomal subunit protein uL29 (123 aa).

It belongs to the universal ribosomal protein uL29 family.

The sequence is that of Large ribosomal subunit protein uL29 (rpl-35) from Caenorhabditis elegans.